The primary structure comprises 721 residues: Catalase-peroxidase 1 (721 aa).

Positions 98–223 (WHAAGSYRVA…LAAVQMGLIY (126 aa)) form a cross-link, tryptophyl-tyrosyl-methioninium (Trp-Tyr) (with M-249). The active-site Proton acceptor is the histidine 99. Positions 223–249 (YVNPEGVNGQPDPLRTAQDVRVTFGRM) form a cross-link, tryptophyl-tyrosyl-methioninium (Tyr-Met) (with W-98). Position 264 (histidine 264) interacts with heme b.

Belongs to the peroxidase family. Peroxidase/catalase subfamily. Homodimer or homotetramer. Requires heme b as cofactor. Formation of the three residue Trp-Tyr-Met cross-link is important for the catalase, but not the peroxidase activity of the enzyme.

It catalyses the reaction H2O2 + AH2 = A + 2 H2O. The enzyme catalyses 2 H2O2 = O2 + 2 H2O. Functionally, bifunctional enzyme with both catalase and broad-spectrum peroxidase activity. This is Catalase-peroxidase 1 from Legionella pneumophila (strain Paris).